Reading from the N-terminus, the 857-residue chain is Zinc finger protein 574 (857 aa).

C2H2-type zinc fingers lie at residues Y15 to H37, Y58 to H80, Y99 to H121, Y206 to H228, F297 to H319, F324 to H346, Y352 to H374, F380 to H401, F428 to H451, H457 to H479, Y485 to H507, Y513 to H535, Y541 to H563, and Y569 to H591. Residues H597–K619 form a C2H2-type 15; degenerate zinc finger. C2H2-type zinc fingers lie at residues L628–H651, L681–H703, Y709–H731, F737–H759, and H765–H787. The interval A648 to G678 is disordered. A compositionally biased stretch (polar residues) spans H651–K663.

It belongs to the krueppel C2H2-type zinc-finger protein family.

It is found in the nucleus. In terms of biological role, may be involved in transcriptional regulation. The polypeptide is Zinc finger protein 574 (znf574) (Xenopus tropicalis (Western clawed frog)).